The primary structure comprises 169 residues: Probable calcium-binding protein CML13 (169 aa).

The interval 1–26 (MSTVKGQTRRERPRGARPHGLTKQKR) is disordered. Residues 15–24 (GARPHGLTKQ) are compositionally biased toward basic residues. 4 consecutive EF-hand domains span residues 24-59 (QKRQ…LGFE), 60-95 (MTEE…KIGE), 97-132 (DSKE…LGEN), and 133-168 (FTYQ…TGYG). Positions 37, 39, 41, 43, 48, 73, 75, 77, 79, 84, 110, 112, 114, 116, 121, 146, 148, 150, 152, and 157 each coordinate Ca(2+).

Functionally, potential calcium sensor. The chain is Probable calcium-binding protein CML13 (CML13) from Oryza sativa subsp. japonica (Rice).